Here is a 465-residue protein sequence, read N- to C-terminus: MLPLVALVGRPNVGKSTIFNALTRTRDALVHDQPGVTRDRNYGVCRLDEDNHFLVVDTGGIAGEDEGLAGATTRQARAAAAEADLILFVVDAREGTSALDDEILAWLRKLSRPTLLLINKIDGTDEDSVRSEFARYGFGEMLTVSAAHRQGLDDLLDEVIQRLPEEGSGEELDNDPNRIRIAFVGRPNVGKSTLVNRILGEERMIASDVPGTTRDSIAVDLERDGREYRLIDTAGLRRRSRVDEVVEKFSVVKTMQSIEQCQVAVLMLDATEGVTDQDATVLGAVLDAGRALVIAINKWDGLTEYQREQAETMLSLKLGFVPWAESVRISAKHGSGLRELFRAVHRAHESANKTFTTSEVNKALEVAYETNPPPTIRGHVSKLRYVHPAGANPPTFIVHGTRLKELQESYKRYLENFFRKRFKLIGTPVSFIFREGTNPYEGKKNVLTERQVKAKRRLMKHVKGK.

EngA-type G domains lie at 3-167 (PLVA…PEEG) and 179-352 (IRIA…ESAN). Residues 9-16 (GRPNVGKS), 57-61 (DTGGI), 119-122 (NKID), 185-192 (GRPNVGKS), 232-236 (DTAGL), and 297-300 (NKWD) contribute to the GTP site. The region spanning 353–437 (KTFTTSEVNK…PVSFIFREGT (85 aa)) is the KH-like domain.

Belongs to the TRAFAC class TrmE-Era-EngA-EngB-Septin-like GTPase superfamily. EngA (Der) GTPase family. In terms of assembly, associates with the 50S ribosomal subunit.

GTPase that plays an essential role in the late steps of ribosome biogenesis. This chain is GTPase Der, found in Stenotrophomonas maltophilia (strain K279a).